Consider the following 226-residue polypeptide: uncharacterized protein (226 aa).

Residues 1-92 (MNPNIAKISS…QLLHIAPKAK (92 aa)) form the HTH arsR-type domain. Positions 32–55 (AGELAYLANIKPQTASFHLNKLLE) form a DNA-binding region, H-T-H motif.

This is an uncharacterized protein from Bacillus subtilis (strain 168).